A 305-amino-acid chain; its full sequence is UPF0282 protein Pisl_0021 (305 aa).

Belongs to the UPF0282 family.

This chain is UPF0282 protein Pisl_0021, found in Pyrobaculum islandicum (strain DSM 4184 / JCM 9189 / GEO3).